The chain runs to 425 residues: Probable mitochondrial import inner membrane translocase subunit tin-44 (425 aa).

The stretch at 38–149 (FLNNLIDNVR…EHVEKVAEKV (112 aa)) forms a coiled coil.

Belongs to the Tim44 family. As to quaternary structure, probable component of the PAM complex at least composed of a mitochondrial HSP70 protein, GrpE, tin-44, tim-16 and tim-14/dnj-21. The complex interacts with the tim-23 component of the TIM23 complex.

It localises to the mitochondrion inner membrane. Essential component of the PAM complex, a complex required for the translocation of transit peptide-containing proteins from the inner membrane into the mitochondrial matrix in an ATP-dependent manner. Recruits mitochondrial HSP70 to drive protein translocation into the matrix using ATP as an energy source. The chain is Probable mitochondrial import inner membrane translocase subunit tin-44 from Caenorhabditis elegans.